The following is a 628-amino-acid chain: MGSCARLLLLWGCSAVAAGLNGVAGANSRCEKACNPRMGNLALGRKLRADTMCGQNATELFCFYSENADLTCRQPKCDKCNAAHSHLAHPPSAMADSSFRFPRTWWQSAEDVHREKIQLDLEAEFYFTHLIMVFKSPRPAAMVLDRSQDFGKTWKPYKYFATNCSATFGLEDDVVKKGAICTSRYSNPFPCTGGEVIFRALSPPYDIENPYSAKVQEQLKITNLRVRLLKRQSCPCQINDLNAKPHHFMHYAVYDFIVKGSCFCNGHADQCLPVEGFRPIKAPGAFHVVHGRCMCKHNTAGSHCQHCAPLYNDRPWEAADGRTGAPNECRTCKCNGHADTCHFDVNVWEASGNRSGGVCNNCQHNTEGQHCQRCKPGFYRDLRRPFSAPDACKACSCHPVGSAILPFSSVTFCDPSNGDCPCKPGVAGPHCDRCMVGYWGFGDYGCRPCDCAGSCDPLTGDCISSNADVDWYHEVPAFHSMHNKSEPSWEWEDEQGFSALRHSGKCECKEQVLGNPKAFCGMKYSYVLKIKILSAHDKGSHAEVNVKIKKVLKSTKLKILRGKRTLYPESWTNRGCTCPILNPGLEYLVAGHEDVRTGKLIVNMKSFVQHWKPALGRRVMHILKRDCV.

The N-terminal stretch at 1 to 19 is a signal peptide; sequence MGSCARLLLLWGCSAVAAG. The region spanning 30 to 261 is the Laminin N-terminal domain; the sequence is CEKACNPRMG…AVYDFIVKGS (232 aa). N-linked (GlcNAc...) asparagine glycans are attached at residues Asn-56 and Asn-163. Cystine bridges form between Cys-262-Cys-271, Cys-264-Cys-293, Cys-295-Cys-304, Cys-307-Cys-329, Cys-332-Cys-341, Cys-334-Cys-359, Cys-362-Cys-371, Cys-374-Cys-392, Cys-395-Cys-413, Cys-397-Cys-420, Cys-422-Cys-431, and Cys-434-Cys-446. Laminin EGF-like domains lie at 262-331, 332-394, and 395-448; these read CFCN…ECRT, CKCN…ACKA, and CSCH…GCRP. Asn-353 is a glycosylation site (N-linked (GlcNAc...) asparagine). N-linked (GlcNAc...) asparagine glycosylation occurs at Asn-483. 2 disulfide bridges follow: Cys-506/Cys-576 and Cys-520/Cys-627. The NTR domain maps to 506–627; the sequence is CECKEQVLGN…RVMHILKRDC (122 aa).

In terms of assembly, may form a homodimer. Expressed in kidney, liver, heart, ovary, testis, retina, brain, olfactory bulb, and widely expressed in embryo.

Its subcellular location is the secreted. It localises to the extracellular space. It is found in the extracellular matrix. The protein resides in the basement membrane. May play an important role in neural, kidney and vascular development. Promotes neurite elongation from olfactory bulb explants. The polypeptide is Netrin-4 (Ntn4) (Mus musculus (Mouse)).